The following is a 406-amino-acid chain: Synaptic vesicle membrane protein VAT-1 homolog (406 aa).

Positions 1 to 57 are disordered; it reads MSAEREAAEAATVAAATEAGAETGTGAGEGAPSQPPTVEVASDPQPPPAPEASASAS. The residue at position 2 (Ser2) is an N-acetylserine. Ser2 carries the post-translational modification Phosphoserine. The segment covering 9 to 22 has biased composition (low complexity); it reads EAATVAAATEAGAE. A phosphoserine mark is found at Ser33 and Ser42.

Belongs to the zinc-containing alcohol dehydrogenase family. Quinone oxidoreductase subfamily.

The protein resides in the cytoplasm. It is found in the mitochondrion outer membrane. In terms of biological role, plays a part in calcium-regulated keratinocyte activation in epidermal repair mechanisms. Has no effect on cell proliferation. Possesses ATPase activity. Negatively regulates mitochondrial fusion in cooperation with mitofusin proteins (MFN1-2). The chain is Synaptic vesicle membrane protein VAT-1 homolog (Vat1) from Mus musculus (Mouse).